The sequence spans 1755 residues: MESQQLSQHSHISHGSACASVTSKEVHTNQDPLDVSASKTEECEKASTKANSQQTTTPASSAVPENPHHASPQPASVPPPQNGPYPQQCMMTQNQANPSGWSFYGHPSMIPYTPYQMSPMYFPPGPQSQFPQYPSSVGTPLSTPSPESGNTFTDSSSADSDMTSTKKYVRPPPMLTSPNDFPNWVKTYIKFLQNSNLGGIIPTVNGKPVRQITDDELTFLYNTFQIFAPSQFLPTWVKDILSVDYTDIMKILSKSIEKMQSDTQEANDIVTLANLQYNGSTPADAFETKVTNIIDRLNNNGIHINNKVACQLIMRGLSGEYKFLRYTRHRHLNMTVAELFLDIHAIYEEQQGSRNSKPNYRRNLSDEKNDSRSYTNTTKPKVIARNPQKTNNSKSKTARAHNVSTSNNSPSTDNDSISKSTTEPIQLNNKHDLHLGQELTESTVNHTNHSDDELPGHLLLDSGASRTLIRSAHHIHSASSNPDINVVDAQKRNIPINAIGDLQFHFQDNTKTSIKVLHTPNIAYDLLSLNELAAVDITACFTKNVLERSDGTVLAPIVKYGDFYWVSKKYLLPSNISVPTINNVHTSESTRKYPYPFIHRMLAHANAQTIRYSLKNNTITYFNESDVDRSSAIDYQCPDCLIGKSTKHRHIKGSRLKYQNSYEPFQYLHTDIFGPVHNLPKSAPSYFISFTDETTKFRWVYPLHDRREDSILDVFTTILAFIKNQFQASVLVIQMDRGSEYTNRTLHKFLEKNGITPCYTTTADSRAHGVAERLNRTLLDDCRTQLQCSGLPNHLWFSAIEFSTIVRNSLASPKSKKSARQHAGLAGLDISTLLPFGQPVIVNDHNPNSKIHPRGIPGYALHPSRNSYGYIIYLPSLKKTVDTTNYVILQGKESRLDQFNYDALTFDEDLNRLTASYQSFIASNEIQQSDDLNIESDHDFQSDIELHPEQPRNVLSKAVSPTDSTPPSTHTEDSKRVSKTNIRAPREVDPNISESNILPSKKRSSTPQISNIESTGSGGMHKLNVPLLAPMSQSNTHESSHASKSKDFRHSDSYSENETNHTNVPISSTGGTNNKTVPQISDQETEKRIIHRSPSIDASPPENNSSHNIVPIKTPTTVSEQNTEESIIADLPLPDLPPESPTEFPDPFKELPPINSHQTNSSLGGIGDSNAYTTINSKKRSLEDNETEIKVSRDTWNTKNMRSLEPPRSKKRIHLIAAVKAVKSIKPIRTTLRYDEAITYNKDIKEKEKYIEAYHKEVNQLLKMKTWDTDEYYDRKEIDPKRVINSMFIFNKKRDGTHKARFVARGDIQHPDTYDSGMQSNTVHHYALMTSLSLALDNNYYITQLDISSAYLYADIKEELYIRPPPHLGMNDKLIRLKKSLYGLKQSGANWYETIKSYLIKQCGMEEVRGWSCVFKNSQVTICLFVDDMILFSKDLNANKKIITTLKKQYDTKIINLGESDNEIQYDILGLEIKYQRGKYMKLGMENSLTEKIPKLNVPLNPKGRKLSAPGQPGLYIDQDELEIDEDEYKEKVHEMQKLIGLASYVGYKFRFDLLYYINTLAQHILFPSRQVLDMTYELIQFMWDTRDKQLIWHKNKPTEPDNKLVAISDASYGNQPYYKSQIGNIYLLNGKVIGGKSTKASLTCTSTTEAEIHAISESVPLLNNLSYLIQELNKKPIIKGLLTDSRSTISIIKSTNEEKFRNRFFGTKAMRLRDEVSGNNLYVYYIETKKNIADVMTKPLPIKTFKLLTNKWIH.

A compositionally biased stretch (low complexity) spans 1 to 16 (MESQQLSQHSHISHGS). Disordered regions lie at residues 1–93 (MESQ…MMTQ), 126–173 (PQSQ…RPPP), and 352–421 (GSRN…SKST). Composition is skewed to polar residues over residues 48 to 60 (TKANSQQTTTPAS) and 127 to 152 (QSQFPQYPSSVGTPLSTPSPESGNTF). The segment covering 153–165 (TDSSSADSDMTST) has biased composition (low complexity). The RNA-binding stretch occupies residues 299–401 (NNGIHINNKV…NSKSKTARAH (103 aa)). A compositionally biased stretch (low complexity) spans 402–418 (NVSTSNNSPSTDNDSIS). Phosphoserine is present on Ser-416. The For protease activity; shared with dimeric partner role is filled by Asp-461. Positions 583 to 640 (NVHTSESTRKYPYPFIHRMLAHANAQTIRYSLKNNTITYFNESDVDRSSAIDYQCPDC) are integrase-type zinc finger-like. The region spanning 660–835 (NSYEPFQYLH…AGLDISTLLP (176 aa)) is the Integrase catalytic domain. Residues Asp-671 and Asp-736 each contribute to the Mg(2+) site. Disordered regions lie at residues 956–1087 (SKAV…ETEK), 1092–1111 (RSPSIDASPPENNSSHNIVP), and 1130–1171 (DLPL…DSNA). Low complexity predominate over residues 960-969 (SPTDSTPPST). The segment covering 1005 to 1015 (STPQISNIEST) has biased composition (polar residues). Over residues 1038–1053 (ESSHASKSKDFRHSDS) the composition is skewed to basic and acidic residues. 2 stretches are compositionally biased toward polar residues: residues 1054 to 1082 (YSENETNHTNVPISSTGGTNNKTVPQISD) and 1101 to 1111 (PENNSSHNIVP). The Bipartite nuclear localization signal motif lies at 1178-1212 (KKRSLEDNETEIKVSRDTWNTKNMRSLEPPRSKKR). The Reverse transcriptase Ty1/copia-type domain maps to 1338–1476 (NNYYITQLDI…DILGLEIKYQ (139 aa)). Positions 1346, 1427, 1428, 1610, 1652, and 1685 each coordinate Mg(2+). The 143-residue stretch at 1610 to 1752 (DASYGNQPYY…IKTFKLLTNK (143 aa)) folds into the RNase H Ty1/copia-type domain.

In terms of assembly, the capsid protein forms a homotrimer, from which the VLPs are assembled. The protease is a homodimer, whose active site consists of two apposed aspartic acid residues. In terms of processing, initially, virus-like particles (VLPs) are composed of the structural unprocessed proteins Gag and Gag-Pol, and also contain the host initiator methionine tRNA (tRNA(i)-Met) which serves as a primer for minus-strand DNA synthesis, and a dimer of genomic Ty RNA. Processing of the polyproteins occurs within the particle and proceeds by an ordered pathway, called maturation. First, the protease (PR) is released by autocatalytic cleavage of the Gag-Pol polyprotein yielding capsid protein p45 and a Pol-p154 precursor protein. This cleavage is a prerequisite for subsequent processing of Pol-p154 at the remaining sites to release the mature structural and catalytic proteins. Maturation takes place prior to the RT reaction and is required to produce transposition-competent VLPs.

It localises to the cytoplasm. Its subcellular location is the nucleus. It carries out the reaction DNA(n) + a 2'-deoxyribonucleoside 5'-triphosphate = DNA(n+1) + diphosphate. The catalysed reaction is Endonucleolytic cleavage to 5'-phosphomonoester.. In terms of biological role, capsid protein (CA) is the structural component of the virus-like particle (VLP), forming the shell that encapsulates the retrotransposons dimeric RNA genome. The particles are assembled from trimer-clustered units and there are holes in the capsid shells that allow for the diffusion of macromolecules. CA also has nucleocapsid-like chaperone activity, promoting primer tRNA(i)-Met annealing to the multipartite primer-binding site (PBS), dimerization of Ty1 RNA and initiation of reverse transcription. The aspartyl protease (PR) mediates the proteolytic cleavages of the Gag and Gag-Pol polyproteins after assembly of the VLP. Functionally, reverse transcriptase/ribonuclease H (RT) is a multifunctional enzyme that catalyzes the conversion of the retro-elements RNA genome into dsDNA within the VLP. The enzyme displays a DNA polymerase activity that can copy either DNA or RNA templates, and a ribonuclease H (RNase H) activity that cleaves the RNA strand of RNA-DNA heteroduplexes during plus-strand synthesis and hydrolyzes RNA primers. The conversion leads to a linear dsDNA copy of the retrotransposon that includes long terminal repeats (LTRs) at both ends. Its function is as follows. Integrase (IN) targets the VLP to the nucleus, where a subparticle preintegration complex (PIC) containing at least integrase and the newly synthesized dsDNA copy of the retrotransposon must transit the nuclear membrane. Once in the nucleus, integrase performs the integration of the dsDNA into the host genome. The chain is Transposon Ty1-ML2 Gag-Pol polyprotein (TY1B-ML2) from Saccharomyces cerevisiae (strain ATCC 204508 / S288c) (Baker's yeast).